Here is a 125-residue protein sequence, read N- to C-terminus: Small ribosomal subunit protein bS6 (125 aa).

The tract at residues 96-125 (VTEASPMKAAKEERKPLAEVENNDFEDAEE) is disordered. Residues 104 to 113 (AAKEERKPLA) show a composition bias toward basic and acidic residues. Acidic residues predominate over residues 116 to 125 (ENNDFEDAEE).

Belongs to the bacterial ribosomal protein bS6 family.

Its function is as follows. Binds together with bS18 to 16S ribosomal RNA. This chain is Small ribosomal subunit protein bS6, found in Haemophilus influenzae (strain 86-028NP).